The primary structure comprises 142 residues: UPF0102 protein Bamb_0202 (142 aa).

Residues 1 to 23 form a disordered region; it reads MCHAAPAAPASGRGLPHGGGNFS.

This sequence belongs to the UPF0102 family.

This Burkholderia ambifaria (strain ATCC BAA-244 / DSM 16087 / CCUG 44356 / LMG 19182 / AMMD) (Burkholderia cepacia (strain AMMD)) protein is UPF0102 protein Bamb_0202.